The following is a 191-amino-acid chain: UPF0398 protein LSEI_1479 (191 aa).

It belongs to the UPF0398 family.

In Lacticaseibacillus paracasei (strain ATCC 334 / BCRC 17002 / CCUG 31169 / CIP 107868 / KCTC 3260 / NRRL B-441) (Lactobacillus paracasei), this protein is UPF0398 protein LSEI_1479.